Reading from the N-terminus, the 287-residue chain is Putative B3 domain-containing protein Os08g0157700 (287 aa).

The span at 17–29 (ATEEEEEEEEEEQ) shows a compositional bias: acidic residues. A disordered region spans residues 17-36 (ATEEEEEEEEEEQALGQEPA). Positions 71–168 (FDKVVTPSDV…RYFIDYRHCH (98 aa)) form a DNA-binding region, TF-B3.

It is found in the nucleus. This is Putative B3 domain-containing protein Os08g0157700 from Oryza sativa subsp. japonica (Rice).